A 144-amino-acid polypeptide reads, in one-letter code: Small ribosomal subunit protein uS9 (144 aa).

Residue Thr2 is modified to N-acetylthreonine. The tract at residues Arg124–Arg144 is disordered.

It belongs to the universal ribosomal protein uS9 family.

In Caenorhabditis elegans, this protein is Small ribosomal subunit protein uS9 (rps-16).